Here is a 363-residue protein sequence, read N- to C-terminus: Probable dual-specificity RNA methyltransferase RlmN (363 aa).

Glutamate 106 functions as the Proton acceptor in the catalytic mechanism. The 234-residue stretch at 112–345 (HEYGNSVCVT…VTIRREQGHD (234 aa)) folds into the Radical SAM core domain. Cysteine 119 and cysteine 350 are joined by a disulfide. [4Fe-4S] cluster-binding residues include cysteine 126, cysteine 130, and cysteine 133. Residues 176–177 (GE), serine 208, 231–233 (SLH), and asparagine 307 each bind S-adenosyl-L-methionine. Cysteine 350 functions as the S-methylcysteine intermediate in the catalytic mechanism.

The protein belongs to the radical SAM superfamily. RlmN family. [4Fe-4S] cluster is required as a cofactor.

It localises to the cytoplasm. It carries out the reaction adenosine(2503) in 23S rRNA + 2 reduced [2Fe-2S]-[ferredoxin] + 2 S-adenosyl-L-methionine = 2-methyladenosine(2503) in 23S rRNA + 5'-deoxyadenosine + L-methionine + 2 oxidized [2Fe-2S]-[ferredoxin] + S-adenosyl-L-homocysteine. The enzyme catalyses adenosine(37) in tRNA + 2 reduced [2Fe-2S]-[ferredoxin] + 2 S-adenosyl-L-methionine = 2-methyladenosine(37) in tRNA + 5'-deoxyadenosine + L-methionine + 2 oxidized [2Fe-2S]-[ferredoxin] + S-adenosyl-L-homocysteine. Specifically methylates position 2 of adenine 2503 in 23S rRNA and position 2 of adenine 37 in tRNAs. This is Probable dual-specificity RNA methyltransferase RlmN from Bacillus subtilis (strain 168).